The primary structure comprises 240 residues: Intestine-specific homeobox (240 aa).

The segment at 36–82 (PTERRSLPRPQSICKEDSRQTTIPGSKLERPPQDQPQEEKKNKRRVR) is disordered. Basic and acidic residues predominate over residues 62 to 76 (KLERPPQDQPQEEKK). The homeobox DNA-binding region spans 78-137 (KRRVRTTFTTEQLQELEKLFHFTHYPDIHVRSQLASRINLPEARVQIWFQNQRAKWRKQE).

In terms of tissue distribution, expressed in intestinal epithelial cells from the duodenum to the proximal colon.

It is found in the nucleus. In terms of biological role, transcription factor that regulates gene expression in intestine. May participate in vitamin A metabolism most likely by regulating BCO1 expression in the intestine. The chain is Intestine-specific homeobox (Isx) from Mus musculus (Mouse).